The chain runs to 437 residues: Glutamyl-tRNA reductase (437 aa).

Substrate contacts are provided by residues 49 to 52 (TCNR), Ser109, 114 to 116 (EGQ), and Gln120. Cys50 (nucleophile) is an active-site residue. 198–203 (GAGRMS) contributes to the NADP(+) binding site.

The protein belongs to the glutamyl-tRNA reductase family. As to quaternary structure, homodimer.

It carries out the reaction (S)-4-amino-5-oxopentanoate + tRNA(Glu) + NADP(+) = L-glutamyl-tRNA(Glu) + NADPH + H(+). It participates in porphyrin-containing compound metabolism; protoporphyrin-IX biosynthesis; 5-aminolevulinate from L-glutamyl-tRNA(Glu): step 1/2. The protein operates within porphyrin-containing compound metabolism; chlorophyll biosynthesis. Catalyzes the NADPH-dependent reduction of glutamyl-tRNA(Glu) to glutamate 1-semialdehyde (GSA). This is Glutamyl-tRNA reductase from Prochlorococcus marinus (strain SARG / CCMP1375 / SS120).